Reading from the N-terminus, the 108-residue chain is uncharacterized protein (108 aa).

The segment at 1–23 (MVDELEKNQVQPQETEENKENAL) is disordered.

This is an uncharacterized protein from Ureaplasma parvum serovar 3 (strain ATCC 700970).